A 250-amino-acid chain; its full sequence is N-acyl homoserine lactonase (250 aa).

Zn(2+) is bound by residues His104, His106, Asp108, His109, His169, Asp191, and His235.

It belongs to the metallo-beta-lactamase superfamily. As to quaternary structure, monomer. The cofactor is Zn(2+).

It carries out the reaction an N-acyl-L-homoserine lactone + H2O = an N-acyl-L-homoserine + H(+). In terms of biological role, catalyzes hydrolysis of N-hexanoyl-(S)-homoserine lactone, but not the R-enantiomer. Hydrolyzes short- and long-chain N-acyl homoserine lactones with or without 3-oxo substitution at C3, has maximum activity on C10-AHL. The sequence is that of N-acyl homoserine lactonase from Bacillus thuringiensis subsp. indiana.